We begin with the raw amino-acid sequence, 654 residues long: tRNA 5-methylaminomethyl-2-thiouridine biosynthesis bifunctional protein MnmC (654 aa).

The tRNA (mnm(5)s(2)U34)-methyltransferase stretch occupies residues 1-236 (MPTLLQHAQI…KWEVMSGAYV (236 aa)). Residues 262 to 654 (IGAGLAGSSS…FGLRRLIRGK (393 aa)) are FAD-dependent cmnm(5)s(2)U34 oxidoreductase.

It in the N-terminal section; belongs to the methyltransferase superfamily. tRNA (mnm(5)s(2)U34)-methyltransferase family. In the C-terminal section; belongs to the DAO family. Requires FAD as cofactor.

Its subcellular location is the cytoplasm. The enzyme catalyses 5-aminomethyl-2-thiouridine(34) in tRNA + S-adenosyl-L-methionine = 5-methylaminomethyl-2-thiouridine(34) in tRNA + S-adenosyl-L-homocysteine + H(+). Its function is as follows. Catalyzes the last two steps in the biosynthesis of 5-methylaminomethyl-2-thiouridine (mnm(5)s(2)U) at the wobble position (U34) in tRNA. Catalyzes the FAD-dependent demodification of cmnm(5)s(2)U34 to nm(5)s(2)U34, followed by the transfer of a methyl group from S-adenosyl-L-methionine to nm(5)s(2)U34, to form mnm(5)s(2)U34. The protein is tRNA 5-methylaminomethyl-2-thiouridine biosynthesis bifunctional protein MnmC of Pseudomonas putida (strain ATCC 700007 / DSM 6899 / JCM 31910 / BCRC 17059 / LMG 24140 / F1).